We begin with the raw amino-acid sequence, 506 residues long: Chromosomal replication initiator protein DnaA (506 aa).

The segment at 1 to 87 (MSVELWQQCV…IGSRRSSAPR (87 aa)) is domain I, interacts with DnaA modulators. The domain II stretch occupies residues 87 to 169 (RAAPNAPVSA…QVEGALKHTS (83 aa)). The interval 135–154 (DSFDAMAEPAAAPPSGGGRA) is disordered. Low complexity predominate over residues 139–148 (AMAEPAAAPP). Residues 170-386 (YLNRTFTFDT…GALKRVIAHS (217 aa)) are domain III, AAA+ region. ATP contacts are provided by Gly214, Gly216, Lys217, and Thr218. The tract at residues 387–506 (HFMGRDITIE…YKNLLRTLTT (120 aa)) is domain IV, binds dsDNA.

It belongs to the DnaA family. In terms of assembly, oligomerizes as a right-handed, spiral filament on DNA at oriC.

It localises to the cytoplasm. Plays an essential role in the initiation and regulation of chromosomal replication. ATP-DnaA binds to the origin of replication (oriC) to initiate formation of the DNA replication initiation complex once per cell cycle. Binds the DnaA box (a 9 base pair repeat at the origin) and separates the double-stranded (ds)DNA. Forms a right-handed helical filament on oriC DNA; dsDNA binds to the exterior of the filament while single-stranded (ss)DNA is stabiized in the filament's interior. The ATP-DnaA-oriC complex binds and stabilizes one strand of the AT-rich DNA unwinding element (DUE), permitting loading of DNA polymerase. After initiation quickly degrades to an ADP-DnaA complex that is not apt for DNA replication. Binds acidic phospholipids. Its function is as follows. Non-cooperatively binds DnaA boxes in the minimal plasmid RK2 replication origin (oriV). In vitro in the presence of plasmid RK2-derived TrfA and E.coli protein HU, forms an open complex at oriV. This complex was not however competent for formation of a pre-priming complex with E.coli DnaB and DnaC. Broad host range plasmid RK2 requires not only DnaA for replication but also TrfA and host factors. In Pseudomonas putida (strain ATCC 47054 / DSM 6125 / CFBP 8728 / NCIMB 11950 / KT2440), this protein is Chromosomal replication initiator protein DnaA.